The following is a 472-amino-acid chain: Ras-GEF domain-containing family member 1B (472 aa).

Residues His-34–Ala-164 enclose the N-terminal Ras-GEF domain. Residues Asp-204–Pro-452 form the Ras-GEF domain.

Interacts with CCDC124 during cytokinesis. Interacts with Ras family proteins.

The protein resides in the early endosome. Its subcellular location is the late endosome. It localises to the midbody. Functionally, guanine nucleotide exchange factor (GEF) with specificity for RAP2A, it doesn't seems to activate other Ras family proteins (in vitro). This is Ras-GEF domain-containing family member 1B (RASGEF1B) from Pongo abelii (Sumatran orangutan).